Reading from the N-terminus, the 396-residue chain is Tyrosine--tRNA ligase (396 aa).

Positions 42–51 (PTAPDIHLGH) match the 'HIGH' region motif. The short motif at 226 to 230 (KMSKS) is the 'KMSKS' region element. ATP is bound at residue Lys229. Positions 334 to 395 (LPIANLLKEA…GKRKFAKIII (62 aa)) constitute an S4 RNA-binding domain.

It belongs to the class-I aminoacyl-tRNA synthetase family. TyrS type 2 subfamily. As to quaternary structure, homodimer.

It localises to the cytoplasm. It catalyses the reaction tRNA(Tyr) + L-tyrosine + ATP = L-tyrosyl-tRNA(Tyr) + AMP + diphosphate + H(+). Functionally, catalyzes the attachment of tyrosine to tRNA(Tyr) in a two-step reaction: tyrosine is first activated by ATP to form Tyr-AMP and then transferred to the acceptor end of tRNA(Tyr). The chain is Tyrosine--tRNA ligase from Francisella tularensis subsp. tularensis (strain SCHU S4 / Schu 4).